Here is a 1009-residue protein sequence, read N- to C-terminus: Kinesin-like protein KIN-5C (1009 aa).

In terms of domain architecture, Kinesin motor spans 12 to 359 (NVQVLLRCRP…LDYAHRAKNI (348 aa)). Residue 98–105 (GQTGTGKT) participates in ATP binding. Residues 406–526 (YQEESERKVM…NSSLHQKIGR (121 aa)) adopt a coiled-coil conformation. Disordered stretches follow at residues 862 to 882 (SNEQHDAEVDSARTAAEKDVT) and 987 to 1009 (YESFATKETKPQQLTRSPLSQVN). Composition is skewed to basic and acidic residues over residues 863–882 (NEQHDAEVDSARTAAEKDVT) and 987–996 (YESFATKETK). A compositionally biased stretch (polar residues) spans 997 to 1009 (PQQLTRSPLSQVN).

The protein belongs to the TRAFAC class myosin-kinesin ATPase superfamily. Kinesin family. KIN-5/BimC subfamily.

Its subcellular location is the cytoplasm. It is found in the cytoskeleton. The protein resides in the spindle. Responsible for microtubule translocation. May be important for the organization of phragmoplast-specific arrays of microtubules. Plays an essential role in stabilizing the mitotic spindle. Required during mitotic cytokinesis. The protein is Kinesin-like protein KIN-5C of Arabidopsis thaliana (Mouse-ear cress).